Reading from the N-terminus, the 187-residue chain is Ribose 1,5-bisphosphate phosphokinase PhnN (187 aa).

10-17 (GPSGSGKD) is a binding site for ATP.

It belongs to the ribose 1,5-bisphosphokinase family.

The enzyme catalyses alpha-D-ribose 1,5-bisphosphate + ATP = 5-phospho-alpha-D-ribose 1-diphosphate + ADP. Its pathway is metabolic intermediate biosynthesis; 5-phospho-alpha-D-ribose 1-diphosphate biosynthesis; 5-phospho-alpha-D-ribose 1-diphosphate from D-ribose 5-phosphate (route II): step 3/3. Catalyzes the phosphorylation of ribose 1,5-bisphosphate to 5-phospho-D-ribosyl alpha-1-diphosphate (PRPP). This chain is Ribose 1,5-bisphosphate phosphokinase PhnN, found in Klebsiella pneumoniae subsp. pneumoniae (strain ATCC 700721 / MGH 78578).